The sequence spans 295 residues: Protoheme IX farnesyltransferase (295 aa).

A run of 7 helical transmembrane segments spans residues 43–63, 92–112, 114–134, 140–160, 166–186, 231–251, and 272–292; these read PIQLALLVLGTSAAAGGVAAL, SAFVLGVLMCIGSLFLLYALV, PLAALFTLLTIFSYLGWYTPA, WSTEIGAVAGAFPPLIGWSAG, ALGWVLFGVLFFWQVPHFMAV, LLWGLTTWFYGVAAAVTGLWF, and FFASIGYLPLVLGALVIDRLF.

Belongs to the UbiA prenyltransferase family. Protoheme IX farnesyltransferase subfamily.

Its subcellular location is the cell inner membrane. It catalyses the reaction heme b + (2E,6E)-farnesyl diphosphate + H2O = Fe(II)-heme o + diphosphate. It functions in the pathway porphyrin-containing compound metabolism; heme O biosynthesis; heme O from protoheme: step 1/1. In terms of biological role, converts heme B (protoheme IX) to heme O by substitution of the vinyl group on carbon 2 of heme B porphyrin ring with a hydroxyethyl farnesyl side group. The sequence is that of Protoheme IX farnesyltransferase from Opitutus terrae (strain DSM 11246 / JCM 15787 / PB90-1).